The chain runs to 118 residues: Holo-[acyl-carrier-protein] synthase (118 aa).

Mg(2+) contacts are provided by aspartate 5 and glutamate 50.

Belongs to the P-Pant transferase superfamily. AcpS family. The cofactor is Mg(2+).

The protein resides in the cytoplasm. It catalyses the reaction apo-[ACP] + CoA = holo-[ACP] + adenosine 3',5'-bisphosphate + H(+). Functionally, transfers the 4'-phosphopantetheine moiety from coenzyme A to a Ser of acyl-carrier-protein. This is Holo-[acyl-carrier-protein] synthase from Aliarcobacter butzleri (strain RM4018) (Arcobacter butzleri).